A 128-amino-acid polypeptide reads, in one-letter code: MSNIPAELKYVDSHEWLRLEADGSVTVGITAHAQELLGDIVFVELPKVGASLAKDEQAGVVESVKAASDVYCPIAGEVLAVNEELEGEPELANSDPYGDGWFFKIKPANAADLNGLMDAAAYAKEIGA.

One can recognise a Lipoyl-binding domain in the interval 24–106 (SVTVGITAHA…YGDGWFFKIK (83 aa)). At lysine 65 the chain carries N6-lipoyllysine.

It belongs to the GcvH family. In terms of assembly, the glycine cleavage system is composed of four proteins: P, T, L and H. (R)-lipoate serves as cofactor.

Its function is as follows. The glycine cleavage system catalyzes the degradation of glycine. The H protein shuttles the methylamine group of glycine from the P protein to the T protein. The protein is Glycine cleavage system H protein of Chromobacterium violaceum (strain ATCC 12472 / DSM 30191 / JCM 1249 / CCUG 213 / NBRC 12614 / NCIMB 9131 / NCTC 9757 / MK).